The following is a 189-amino-acid chain: Lipid A acyltransferase PagP (189 aa).

A signal peptide spans 1-23 (MRLKLILYFLILSCYLGIGSARA). Catalysis depends on residues histidine 61, aspartate 104, and serine 105.

This sequence belongs to the lipid A palmitoyltransferase family. In terms of assembly, homodimer.

The protein resides in the cell outer membrane. The enzyme catalyses a lipid A + a 1,2-diacyl-sn-glycero-3-phosphocholine = a hepta-acyl lipid A + a 2-acyl-sn-glycero-3-phosphocholine. It carries out the reaction a lipid IVA + a 1,2-diacyl-sn-glycero-3-phosphocholine = a lipid IVB + a 2-acyl-sn-glycero-3-phosphocholine. The catalysed reaction is a lipid IIA + a 1,2-diacyl-sn-glycero-3-phosphocholine = a lipid IIB + a 2-acyl-sn-glycero-3-phosphocholine. Transfers a fatty acid residue from the sn-1 position of a phospholipid to the N-linked hydroxyfatty acid chain on the proximal unit of lipid A or its precursors. This Erwinia tasmaniensis (strain DSM 17950 / CFBP 7177 / CIP 109463 / NCPPB 4357 / Et1/99) protein is Lipid A acyltransferase PagP.